The chain runs to 363 residues: Chorismate synthase (363 aa).

Residues 42-61 are disordered; sequence QRDLDRRKPGTSRHTTQRQE. NADP(+) contacts are provided by Arg48 and Arg54. FMN is bound by residues 125–127, 237–238, Gly277, 292–296, and Arg318; these read RSS, NA, and KPTSS.

It belongs to the chorismate synthase family. Homotetramer. The cofactor is FMNH2.

The catalysed reaction is 5-O-(1-carboxyvinyl)-3-phosphoshikimate = chorismate + phosphate. It functions in the pathway metabolic intermediate biosynthesis; chorismate biosynthesis; chorismate from D-erythrose 4-phosphate and phosphoenolpyruvate: step 7/7. Catalyzes the anti-1,4-elimination of the C-3 phosphate and the C-6 proR hydrogen from 5-enolpyruvylshikimate-3-phosphate (EPSP) to yield chorismate, which is the branch point compound that serves as the starting substrate for the three terminal pathways of aromatic amino acid biosynthesis. This reaction introduces a second double bond into the aromatic ring system. The chain is Chorismate synthase from Pseudomonas aeruginosa (strain LESB58).